The chain runs to 476 residues: FAD-dependent monooxygenase dpasE (476 aa).

The N-terminal stretch at 1–21 is a signal peptide; that stretch reads MSQPAFKIIIVGCSVTGLTLA. FAD is bound by residues Glu35, Ala49, and Arg109. N-linked (GlcNAc...) asparagine glycans are attached at residues Asn190 and Asn219. FAD contacts are provided by Asp308 and Ala321. A helical membrane pass occupies residues 441-461; that stretch reads GAGFWITAFLSLSLLAVAATM.

Belongs to the paxM FAD-dependent monooxygenase family. FAD is required as a cofactor.

It is found in the membrane. It functions in the pathway secondary metabolite biosynthesis; terpenoid biosynthesis. Its function is as follows. FAD-dependent monooxygenase; part of the gene cluster that mediates the biosynthesis of the diterpenoid pyrones subglutinols A and B. The first step of the pathway is the synthesis of the alpha-pyrone moiety by the polyketide synthase dpasA via condensation of one acetyl-CoA starter unit with 3 malonyl-CoA units and 2 methylations. The alpha-pyrone is then combined with geranylgeranyl pyrophosphate (GGPP) formed by the GGPP synthase dpasD through the action of the prenyltransferase dpasC to yield a linear alpha-pyrone diterpenoid. Subsequent steps in the diterpenoid pyrone biosynthetic pathway involve the decalin core formation, which is initiated by the epoxidation of the C10-C11 olefin by the FAD-dependent oxidoreductase dpasE, and is followed by a cyclization cascade catalyzed by the terpene cyclase dpasB. The FAD-linked oxidoreductase dpasF is then involved in tetrahydrofuran (THF) ring formation at the C5 unit to complete the formation of subglutinols A and B. DpasF possesses also an additional catalytic ability of multi-step oxidations to generate a new DDP analog with an enone system at the C5 named FDDP A. This Apiospora sacchari (Arthrinium sacchari) protein is FAD-dependent monooxygenase dpasE.